A 143-amino-acid polypeptide reads, in one-letter code: MAKKIQAYIKLQVKAGQANPSPPVGPALGQHGVNIMEFCKAFNARTQGQEAGLPTPVIITVYSDRSFTFETKSTPASVLLKKAAGLTSGSARPNTVKVGTVTRAQLEDIAKAKQADLTAADLDAAVRTIAGSARSMGLNVEGV.

This sequence belongs to the universal ribosomal protein uL11 family. Part of the ribosomal stalk of the 50S ribosomal subunit. Interacts with L10 and the large rRNA to form the base of the stalk. L10 forms an elongated spine to which L12 dimers bind in a sequential fashion forming a multimeric L10(L12)X complex. Post-translationally, one or more lysine residues are methylated.

Functionally, forms part of the ribosomal stalk which helps the ribosome interact with GTP-bound translation factors. This is Large ribosomal subunit protein uL11 from Pseudomonas putida (strain ATCC 700007 / DSM 6899 / JCM 31910 / BCRC 17059 / LMG 24140 / F1).